The chain runs to 75 residues: Small ribosomal subunit protein bS21 (75 aa).

Positions Arg52–Arg75 are disordered. Residues Arg53–Ala62 show a composition bias toward basic residues.

Belongs to the bacterial ribosomal protein bS21 family.

This is Small ribosomal subunit protein bS21 from Brucella anthropi (strain ATCC 49188 / DSM 6882 / CCUG 24695 / JCM 21032 / LMG 3331 / NBRC 15819 / NCTC 12168 / Alc 37) (Ochrobactrum anthropi).